The following is a 132-amino-acid chain: Small ribosomal subunit protein uS8 (132 aa).

It belongs to the universal ribosomal protein uS8 family. In terms of assembly, part of the 30S ribosomal subunit. Contacts proteins S5 and S12.

One of the primary rRNA binding proteins, it binds directly to 16S rRNA central domain where it helps coordinate assembly of the platform of the 30S subunit. This is Small ribosomal subunit protein uS8 from Leptospira biflexa serovar Patoc (strain Patoc 1 / Ames).